A 450-amino-acid chain; its full sequence is NAD-specific glutamate dehydrogenase (450 aa).

3 residues coordinate substrate: lysine 90, glutamine 111, and lysine 114. Lysine 126 acts as the Proton donor in catalysis. Position 165 (glycine 165) interacts with substrate. The NAD(+) site is built by threonine 210 and asparagine 241. Residue serine 381 coordinates substrate.

Belongs to the Glu/Leu/Phe/Val dehydrogenases family. In terms of assembly, homohexamer.

It carries out the reaction L-glutamate + NAD(+) + H2O = 2-oxoglutarate + NH4(+) + NADH + H(+). Its pathway is amino-acid degradation; L-glutamate degradation via hydroxyglutarate pathway; crotonoyl-CoA from L-glutamate: step 1/5. The polypeptide is NAD-specific glutamate dehydrogenase (gdh) (Clostridium symbiosum (Bacteroides symbiosus)).